The sequence spans 47 residues: MARKYGKAARKCSRCGDHSAIVRRYGLNLCRQCFREIAPKIGFKKYN.

The Zn(2+) site is built by Cys-12, Cys-15, Cys-30, and Cys-33.

Belongs to the universal ribosomal protein uS14 family. Zinc-binding uS14 subfamily. In terms of assembly, part of the 30S ribosomal subunit. It depends on Zn(2+) as a cofactor.

Functionally, binds 16S rRNA, required for the assembly of 30S particles. The protein is Small ribosomal subunit protein uS14 of Methanosphaera stadtmanae (strain ATCC 43021 / DSM 3091 / JCM 11832 / MCB-3).